Consider the following 128-residue polypeptide: uncharacterized protein (128 aa).

This is an uncharacterized protein from Vaccinia virus (strain Copenhagen) (VACV).